Consider the following 366-residue polypeptide: Protein FAM131A (366 aa).

The interval 342 to 366 (QRQASDLASSGVVSLDEDEAEPEEQ) is disordered. The span at 356–366 (LDEDEAEPEEQ) shows a compositional bias: acidic residues.

This sequence belongs to the FAM131 family.

This Homo sapiens (Human) protein is Protein FAM131A (FAM131A).